The chain runs to 155 residues: Ribosome maturation factor RimP (155 aa).

Belongs to the RimP family.

Its subcellular location is the cytoplasm. Required for maturation of 30S ribosomal subunits. The sequence is that of Ribosome maturation factor RimP from Parasynechococcus marenigrum (strain WH8102).